Reading from the N-terminus, the 304-residue chain is Acetylglutamate kinase (304 aa).

Residues 70-71, R92, and N196 contribute to the substrate site; that span reads GG.

The protein belongs to the acetylglutamate kinase family. ArgB subfamily.

The protein resides in the cytoplasm. It carries out the reaction N-acetyl-L-glutamate + ATP = N-acetyl-L-glutamyl 5-phosphate + ADP. Its pathway is amino-acid biosynthesis; L-arginine biosynthesis; N(2)-acetyl-L-ornithine from L-glutamate: step 2/4. Its function is as follows. Catalyzes the ATP-dependent phosphorylation of N-acetyl-L-glutamate. This chain is Acetylglutamate kinase, found in Methanococcoides burtonii (strain DSM 6242 / NBRC 107633 / OCM 468 / ACE-M).